Reading from the N-terminus, the 5207-residue chain is E3 ubiquitin-protein ligase RNF213 (5207 aa).

2 disordered regions span residues 1 to 20 (MECP…FCSQ) and 27 to 365 (PAAP…EADV). The segment covering 34 to 43 (SENNNSTMAS) has biased composition (polar residues). A compositionally biased stretch (basic residues) spans 89 to 100 (KKKKRKKKKKGN). Composition is skewed to low complexity over residues 101–117 (KSAS…PASP) and 136–157 (SQAQ…ATTP). A compositionally biased stretch (polar residues) spans 188–197 (SEAQSSPQFQ). A phosphoserine mark is found at serine 208 and serine 217. Over residues 248–266 (GGSSEPGTELQTTEQQAGA) the composition is skewed to polar residues. Composition is skewed to basic and acidic residues over residues 285 to 294 (AGKEMKEKTQ), 309 to 346 (HCQE…EGKN), and 353 to 362 (KNEKEQKNQE). Residues 343-374 (EGKNRSAAAVKNEKEQKNQEADVQEVKASTLS) are a coiled coil. A Glycyl lysine isopeptide (Lys-Gly) (interchain with G-Cter in SUMO2) cross-link involves residue lysine 1151. A Phosphoserine modification is found at serine 1258. ATP is bound by residues 1995 to 2000 (GVGKSL), glutamate 2098, aspartate 2155, and arginine 2216. Serine 2273 bears the Phosphoserine mark. Lysine 2499 and serine 2574 together coordinate ATP. Residues cysteine 3997, cysteine 4000, cysteine 4012, histidine 4014, cysteine 4017, cysteine 4020, cysteine 4032, cysteine 4035, cysteine 4505, and histidine 4509 each contribute to the Zn(2+) site. The RING-type zinc finger occupies 3997-4036 (CSICLGDAKDPVCLPCDHVHCLRCLRAWFASEQMICPYCL). Residues 4483–4555 (MPEDLLAQAR…VKDKADRTQT (73 aa)) form an RZ-type zinc finger. The active-site Nucleophile; for E3 ubiquitin-lipopolysaccharide ligase activity is the cysteine 4516. Cysteine 4525 and cysteine 4528 together coordinate Zn(2+).

The protein belongs to the AAA ATPase family. As to quaternary structure, monomer. Interacts with UBE2L3/UBCH7; UBE2L3/UBCH7 is the most efficient ubiquitin-conjugating enzyme E2 for the ubiquitin ligase activity. Interacts with UBE2N/UBC13; promoting 'Lys-63'-linked ubiquitination of target proteins. In terms of assembly, (Microbial infection) Interacts with M.tuberculosis protein Rv3655c, which impairs caspase-8 activation and suppresses macrophage apoptosis by blocking the extrinsic pathway. Post-translationally, autoubiquitinated. In terms of tissue distribution, widely expressed (at protein level). As to expression, major isoform detected in all tissues examined. Minor isoform with restricted expression.

It is found in the cytoplasm. The protein resides in the cytosol. It localises to the lipid droplet. It carries out the reaction S-ubiquitinyl-[E2 ubiquitin-conjugating enzyme]-L-cysteine + [acceptor protein]-L-lysine = [E2 ubiquitin-conjugating enzyme]-L-cysteine + N(6)-ubiquitinyl-[acceptor protein]-L-lysine.. The enzyme catalyses ATP + H2O = ADP + phosphate + H(+). It functions in the pathway protein modification; protein ubiquitination. In terms of biological role, atypical E3 ubiquitin ligase that can catalyze ubiquitination of both proteins and lipids, and which is involved in various processes, such as lipid metabolism, angiogenesis and cell-autonomous immunity. Acts as a key immune sensor by catalyzing ubiquitination of the lipid A moiety of bacterial lipopolysaccharide (LPS) via its RZ-type zinc-finger: restricts the proliferation of cytosolic bacteria, such as Salmonella, by generating the bacterial ubiquitin coat through the ubiquitination of LPS. Also acts indirectly by mediating the recruitment of the LUBAC complex, which conjugates linear polyubiquitin chains. Ubiquitination of LPS triggers cell-autonomous immunity, such as antibacterial autophagy, leading to degradation of the microbial invader. Involved in lipid metabolism by regulating fat storage and lipid droplet formation; act by inhibiting the lipolytic process. Also regulates lipotoxicity by inhibiting desaturation of fatty acids. Also acts as an E3 ubiquitin-protein ligase via its RING-type zinc finger: mediates 'Lys-63'-linked ubiquitination of target proteins. Involved in the non-canonical Wnt signaling pathway in vascular development: acts by mediating ubiquitination and degradation of FLNA and NFATC2 downstream of RSPO3, leading to inhibit the non-canonical Wnt signaling pathway and promoting vessel regression. Also has ATPase activity; ATPase activity is required for ubiquitination of LPS. In Homo sapiens (Human), this protein is E3 ubiquitin-protein ligase RNF213.